The following is a 356-amino-acid chain: Histidinol-phosphate aminotransferase (356 aa).

Position 211 is an N6-(pyridoxal phosphate)lysine (Lys211).

Belongs to the class-II pyridoxal-phosphate-dependent aminotransferase family. Histidinol-phosphate aminotransferase subfamily. Homodimer. Requires pyridoxal 5'-phosphate as cofactor.

It carries out the reaction L-histidinol phosphate + 2-oxoglutarate = 3-(imidazol-4-yl)-2-oxopropyl phosphate + L-glutamate. It participates in amino-acid biosynthesis; L-histidine biosynthesis; L-histidine from 5-phospho-alpha-D-ribose 1-diphosphate: step 7/9. The chain is Histidinol-phosphate aminotransferase from Aeromonas hydrophila subsp. hydrophila (strain ATCC 7966 / DSM 30187 / BCRC 13018 / CCUG 14551 / JCM 1027 / KCTC 2358 / NCIMB 9240 / NCTC 8049).